The chain runs to 338 residues: tRNA N6-adenosine threonylcarbamoyltransferase (338 aa).

Residues His-112 and His-116 each coordinate Fe cation. Substrate contacts are provided by residues 135–139, Asp-168, Gly-181, and Asn-273; that span reads LVSGG. Asp-301 provides a ligand contact to Fe cation.

The protein belongs to the KAE1 / TsaD family. The cofactor is Fe(2+).

The protein resides in the cytoplasm. The enzyme catalyses L-threonylcarbamoyladenylate + adenosine(37) in tRNA = N(6)-L-threonylcarbamoyladenosine(37) in tRNA + AMP + H(+). Its function is as follows. Required for the formation of a threonylcarbamoyl group on adenosine at position 37 (t(6)A37) in tRNAs that read codons beginning with adenine. Is involved in the transfer of the threonylcarbamoyl moiety of threonylcarbamoyl-AMP (TC-AMP) to the N6 group of A37, together with TsaE and TsaB. TsaD likely plays a direct catalytic role in this reaction. This Buchnera aphidicola subsp. Baizongia pistaciae (strain Bp) protein is tRNA N6-adenosine threonylcarbamoyltransferase.